Reading from the N-terminus, the 552-residue chain is Phosphoribosylaminoimidazole carboxylase (552 aa).

Positions 108–295 constitute an ATP-grasp domain; the sequence is KQHLQVFKIA…QFEAHLRAIC (188 aa). 134–189 serves as a coordination point for ATP; sequence GQEFGYPFVLKSKTLAYDGRGNYVVHQPSEIPTAIKALGDRPLYVEKFVPFSMEIA.

This sequence in the C-terminal section; belongs to the AIR carboxylase family. Class I subfamily.

It carries out the reaction 5-amino-1-(5-phospho-D-ribosyl)imidazole-4-carboxylate + H(+) = 5-amino-1-(5-phospho-beta-D-ribosyl)imidazole + CO2. It functions in the pathway purine metabolism; IMP biosynthesis via de novo pathway; 5-amino-1-(5-phospho-D-ribosyl)imidazole-4-carboxylate from 5-amino-1-(5-phospho-D-ribosyl)imidazole (carboxylase route): step 1/1. This chain is Phosphoribosylaminoimidazole carboxylase (ade6), found in Schizosaccharomyces pombe (strain 972 / ATCC 24843) (Fission yeast).